The chain runs to 245 residues: MIIPALDLIDGQVVRLHQGDYGQQRQYGSDPLPRLQDYQQQGAGVLHLVDLTGAKDPSARQIPLLTTLLAGVSVPVQIGGGIRTEQDVEALLKAGASRVVIGSTAVKQPELVQQWFTRYGAEALVLALDVRIDANGTKFVAISGWQENSDATLEQVVEQYLPFGLKHVLCTDISRDGTLSGSNVELYREISQRYPQIAFQASGGIGNLTDIANLRGSGVQGVIVGRALLEGKFNVAEAISCWQNG.

Residue D7 is the Proton acceptor of the active site. D129 functions as the Proton donor in the catalytic mechanism.

It belongs to the HisA/HisF family.

Its subcellular location is the cytoplasm. The enzyme catalyses 1-(5-phospho-beta-D-ribosyl)-5-[(5-phospho-beta-D-ribosylamino)methylideneamino]imidazole-4-carboxamide = 5-[(5-phospho-1-deoxy-D-ribulos-1-ylimino)methylamino]-1-(5-phospho-beta-D-ribosyl)imidazole-4-carboxamide. It participates in amino-acid biosynthesis; L-histidine biosynthesis; L-histidine from 5-phospho-alpha-D-ribose 1-diphosphate: step 4/9. This is 1-(5-phosphoribosyl)-5-[(5-phosphoribosylamino)methylideneamino] imidazole-4-carboxamide isomerase from Pectobacterium carotovorum subsp. carotovorum (strain PC1).